Here is a 192-residue protein sequence, read N- to C-terminus: Glycerol-3-phosphate acyltransferase (192 aa).

5 helical membrane-spanning segments follow: residues 1-21, 49-69, 80-100, 110-130, and 143-163; these read MFIA…AYIL, GLAG…IYSL, ELCI…WLKF, IGVI…SWLF, and IVSI…VVAL.

It belongs to the PlsY family. As to quaternary structure, probably interacts with PlsX.

Its subcellular location is the cell inner membrane. The catalysed reaction is an acyl phosphate + sn-glycerol 3-phosphate = a 1-acyl-sn-glycero-3-phosphate + phosphate. It functions in the pathway lipid metabolism; phospholipid metabolism. Functionally, catalyzes the transfer of an acyl group from acyl-phosphate (acyl-PO(4)) to glycerol-3-phosphate (G3P) to form lysophosphatidic acid (LPA). This enzyme utilizes acyl-phosphate as fatty acyl donor, but not acyl-CoA or acyl-ACP. The protein is Glycerol-3-phosphate acyltransferase of Anaplasma phagocytophilum (strain HZ).